We begin with the raw amino-acid sequence, 221 residues long: Iron-sulfur cluster repair protein YtfE (221 aa).

It belongs to the RIC family. YtfE subfamily. Homodimer.

Its subcellular location is the cytoplasm. Its function is as follows. Di-iron-containing protein involved in the repair of iron-sulfur clusters damaged by oxidative and nitrosative stress conditions. The polypeptide is Iron-sulfur cluster repair protein YtfE (Edwardsiella ictaluri (strain 93-146)).